We begin with the raw amino-acid sequence, 228 residues long: Probable 26S proteasome regulatory subunit p28 (228 aa).

ANK repeat units lie at residues 1–30, 35–64, 71–100, 106–135, 139–168, and 173–203; these read MSNY…SLLL, DGRI…NVNL, SGWT…KPDL, QGVT…SVRI, FNQI…SAVN, and QGWT…EYDL.

In terms of assembly, interacts with RPT3.

In terms of biological role, acts as a chaperone during the assembly of the 26S proteasome, specifically of the 19S regulatory complex (RC) and appears to have an overlapping role with RPN14. The chain is Probable 26S proteasome regulatory subunit p28 (NAS6) from Saccharomyces cerevisiae (strain ATCC 204508 / S288c) (Baker's yeast).